Consider the following 527-residue polypeptide: Peptide chain release factor 3 (527 aa).

The tr-type G domain occupies 9–277; it reads AKRRTFAIIS…AVVNWAPMPL (269 aa). GTP is bound by residues 18 to 25, 86 to 90, and 140 to 143; these read SHPDAGKT, DTPGH, and NKLD.

Belongs to the TRAFAC class translation factor GTPase superfamily. Classic translation factor GTPase family. PrfC subfamily.

It localises to the cytoplasm. Its function is as follows. Increases the formation of ribosomal termination complexes and stimulates activities of RF-1 and RF-2. It binds guanine nucleotides and has strong preference for UGA stop codons. It may interact directly with the ribosome. The stimulation of RF-1 and RF-2 is significantly reduced by GTP and GDP, but not by GMP. The chain is Peptide chain release factor 3 from Pseudomonas syringae pv. tomato (strain ATCC BAA-871 / DC3000).